The primary structure comprises 953 residues: Isoleucine--tRNA ligase (953 aa).

The 'HIGH' region motif lies at 57–67 (PYANGDIHIGH). Position 582 (Glu-582) interacts with L-isoleucyl-5'-AMP. Positions 623 to 627 (KMSKS) match the 'KMSKS' region motif. Lys-626 is a binding site for ATP. Zn(2+) contacts are provided by Cys-916, Cys-919, Cys-936, and Cys-939.

Belongs to the class-I aminoacyl-tRNA synthetase family. IleS type 1 subfamily. In terms of assembly, monomer. Zn(2+) is required as a cofactor.

Its subcellular location is the cytoplasm. It catalyses the reaction tRNA(Ile) + L-isoleucine + ATP = L-isoleucyl-tRNA(Ile) + AMP + diphosphate. Its function is as follows. Catalyzes the attachment of isoleucine to tRNA(Ile). As IleRS can inadvertently accommodate and process structurally similar amino acids such as valine, to avoid such errors it has two additional distinct tRNA(Ile)-dependent editing activities. One activity is designated as 'pretransfer' editing and involves the hydrolysis of activated Val-AMP. The other activity is designated 'posttransfer' editing and involves deacylation of mischarged Val-tRNA(Ile). The sequence is that of Isoleucine--tRNA ligase from Bordetella pertussis (strain Tohama I / ATCC BAA-589 / NCTC 13251).